The chain runs to 79 residues: Conotoxin PnMSGL-03 (79 aa).

The N-terminal stretch at 1 to 20 (MSRLGIMVLTLLLLVFIVTS) is a signal peptide. Positions 21 to 44 (HQDAGEKQATQRDAINFRWRRSLI) are excised as a propeptide. Intrachain disulfides connect Cys52-Cys64, Cys56-Cys73, and Cys63-Cys77. Leu78 carries the leucine amide modification.

Belongs to the conotoxin O3 superfamily. In terms of tissue distribution, expressed by the venom duct.

The protein resides in the secreted. This chain is Conotoxin PnMSGL-03, found in Conus pennaceus (Feathered cone).